We begin with the raw amino-acid sequence, 32 residues long: Unknown protein from spot 206 of 2D-PAGE of etiolated coleoptile (32 aa).

In Zea mays (Maize), this protein is Unknown protein from spot 206 of 2D-PAGE of etiolated coleoptile.